The following is a 258-amino-acid chain: Flagellar brake protein YcgR (258 aa).

Positions 131-248 constitute a PilZ domain; sequence QKREYYRVAT…ALSLIQRYIT (118 aa).

This sequence belongs to the YcgR family. In terms of assembly, monomer. Interacts with the flagellar basal bodies.

The protein resides in the bacterial flagellum basal body. Its function is as follows. Acts as a flagellar brake, regulating swimming and swarming in a bis-(3'-5') cyclic diguanylic acid (c-di-GMP)-dependent manner. Binds 1 c-di-GMP dimer per subunit. Increasing levels of c-di-GMP lead to decreased motility. The polypeptide is Flagellar brake protein YcgR (Nitrosospira multiformis (strain ATCC 25196 / NCIMB 11849 / C 71)).